Reading from the N-terminus, the 206-residue chain is Small ribosomal subunit protein uS4 (206 aa).

An S4 RNA-binding domain is found at Ser-96–Ala-156.

The protein belongs to the universal ribosomal protein uS4 family. Part of the 30S ribosomal subunit. Contacts protein S5. The interaction surface between S4 and S5 is involved in control of translational fidelity.

In terms of biological role, one of the primary rRNA binding proteins, it binds directly to 16S rRNA where it nucleates assembly of the body of the 30S subunit. With S5 and S12 plays an important role in translational accuracy. This is Small ribosomal subunit protein uS4 from Laribacter hongkongensis (strain HLHK9).